A 276-amino-acid polypeptide reads, in one-letter code: Small ribosomal subunit protein uS3 (276 aa).

A KH type-2 domain is found at 17–86; it reads VDEYLAKELD…NPQIDVQDVG (70 aa). A disordered region spans residues 193-276; sequence FQINAPPKEP…AETHGDIQDR (84 aa). The span at 214–227 shows a compositional bias: low complexity; that stretch reads EAEPSQAAETQEQQ. Basic and acidic residues-rich tracts occupy residues 228-240 and 258-276; these read AGEK…RLLD and PESR…IQDR.

Belongs to the universal ribosomal protein uS3 family. Part of the 30S ribosomal subunit.

Its function is as follows. Binds the lower part of the 30S subunit head. This chain is Small ribosomal subunit protein uS3, found in Methanothrix thermoacetophila (strain DSM 6194 / JCM 14653 / NBRC 101360 / PT) (Methanosaeta thermophila).